Here is a 113-residue protein sequence, read N- to C-terminus: T cell receptor alpha variable 8-1 (113 aa).

A signal peptide spans 1-20; it reads MLLLLIPVLGMIFALRDARA. In terms of domain architecture, Ig-like spans 21–113; it reads QSVSQHNHHV…DTAEYFCAVN (93 aa). Cysteines 42 and 110 form a disulfide. The N-linked (GlcNAc...) asparagine glycan is linked to Asn43.

Alpha-beta TR is a heterodimer composed of an alpha and beta chain; disulfide-linked. The alpha-beta TR is associated with the transmembrane signaling CD3 coreceptor proteins to form the TR-CD3 (TcR or TCR). The assembly of alpha-beta TR heterodimers with CD3 occurs in the endoplasmic reticulum where a single alpha-beta TR heterodimer associates with one CD3D-CD3E heterodimer, one CD3G-CD3E heterodimer and one CD247 homodimer forming a stable octameric structure. CD3D-CD3E and CD3G-CD3E heterodimers preferentially associate with TR alpha and TR beta chains, respectively. The association of the CD247 homodimer is the last step of TcR assembly in the endoplasmic reticulum and is required for transport to the cell surface.

Its subcellular location is the cell membrane. Functionally, v region of the variable domain of T cell receptor (TR) alpha chain that participates in the antigen recognition. Alpha-beta T cell receptors are antigen specific receptors which are essential to the immune response and are present on the cell surface of T lymphocytes. Recognize peptide-major histocompatibility (MH) (pMH) complexes that are displayed by antigen presenting cells (APC), a prerequisite for efficient T cell adaptive immunity against pathogens. Binding of alpha-beta TR to pMH complex initiates TR-CD3 clustering on the cell surface and intracellular activation of LCK that phosphorylates the ITAM motifs of CD3G, CD3D, CD3E and CD247 enabling the recruitment of ZAP70. In turn ZAP70 phosphorylates LAT, which recruits numerous signaling molecules to form the LAT signalosome. The LAT signalosome propagates signal branching to three major signaling pathways, the calcium, the mitogen-activated protein kinase (MAPK) kinase and the nuclear factor NF-kappa-B (NF-kB) pathways, leading to the mobilization of transcription factors that are critical for gene expression and essential for T cell growth and differentiation. The T cell repertoire is generated in the thymus, by V-(D)-J rearrangement. This repertoire is then shaped by intrathymic selection events to generate a peripheral T cell pool of self-MH restricted, non-autoaggressive T cells. Post-thymic interaction of alpha-beta TR with the pMH complexes shapes TR structural and functional avidity. The polypeptide is T cell receptor alpha variable 8-1 (Homo sapiens (Human)).